The following is a 240-amino-acid chain: Protein GrpE (240 aa).

The segment covering 1–13 (MTDNQRQSTTDGQ) has biased composition (polar residues). The disordered stretch occupies residues 1–89 (MTDNQRQSTT…DAEQKAEEHW (89 aa)). The segment covering 20–38 (AQATAEAAEQTQATQASAA) has biased composition (low complexity). Over residues 65 to 89 (EALRQRVEELEKALADAEQKAEEHW) the composition is skewed to basic and acidic residues.

Belongs to the GrpE family. In terms of assembly, homodimer.

It localises to the cytoplasm. Its function is as follows. Participates actively in the response to hyperosmotic and heat shock by preventing the aggregation of stress-denatured proteins, in association with DnaK and GrpE. It is the nucleotide exchange factor for DnaK and may function as a thermosensor. Unfolded proteins bind initially to DnaJ; upon interaction with the DnaJ-bound protein, DnaK hydrolyzes its bound ATP, resulting in the formation of a stable complex. GrpE releases ADP from DnaK; ATP binding to DnaK triggers the release of the substrate protein, thus completing the reaction cycle. Several rounds of ATP-dependent interactions between DnaJ, DnaK and GrpE are required for fully efficient folding. The chain is Protein GrpE from Halorhodospira halophila (strain DSM 244 / SL1) (Ectothiorhodospira halophila (strain DSM 244 / SL1)).